The primary structure comprises 41 residues: Large ribosomal subunit protein bL36 (41 aa).

The protein belongs to the bacterial ribosomal protein bL36 family.

The chain is Large ribosomal subunit protein bL36 from Erythrobacter litoralis (strain HTCC2594).